A 272-amino-acid polypeptide reads, in one-letter code: Acetylglutamate kinase (272 aa).

Residues 46 to 47 (GA), arginine 68, and asparagine 166 each bind substrate.

This sequence belongs to the acetylglutamate kinase family. ArgB subfamily.

It localises to the cytoplasm. The catalysed reaction is N-acetyl-L-glutamate + ATP = N-acetyl-L-glutamyl 5-phosphate + ADP. The protein operates within amino-acid biosynthesis; L-arginine biosynthesis; N(2)-acetyl-L-ornithine from L-glutamate: step 2/4. Catalyzes the ATP-dependent phosphorylation of N-acetyl-L-glutamate. The protein is Acetylglutamate kinase of Dehalococcoides mccartyi (strain ATCC BAA-2266 / KCTC 15142 / 195) (Dehalococcoides ethenogenes (strain 195)).